Here is a 70-residue protein sequence, read N- to C-terminus: Large ribosomal subunit protein bL32 (70 aa).

The segment covering 1 to 19 (MAVPKRKTTPSRRGMRRSH) has biased composition (basic residues). Residues 1–21 (MAVPKRKTTPSRRGMRRSHQA) are disordered.

Belongs to the bacterial ribosomal protein bL32 family.

In Gluconobacter oxydans (strain 621H) (Gluconobacter suboxydans), this protein is Large ribosomal subunit protein bL32.